A 440-amino-acid chain; its full sequence is Transposon Ty1-NL1 Gag polyprotein (440 aa).

Polar residues-rich tracts occupy residues 1 to 23, 48 to 60, 71 to 86, and 131 to 152; these read MESQQLSQHSPISHGSACASVTS, TKANSQQTTTPAS, SPQTAQSHSPQNGPYQ, and PQYPSSVGTPLSTPSPESGNTF. 3 disordered regions span residues 1–86, 131–171, and 350–425; these read MESQ…GPYQ, PQYP…YVRP, and QQES…TEPI. Over residues 153-165 the composition is skewed to low complexity; that stretch reads TDSSSADSDMTST. The RNA-binding stretch occupies residues 299–401; sequence NNGIPINNKV…NSQSRTARAH (103 aa). Residues 363–372 show a composition bias toward basic and acidic residues; that stretch reads NPSDEKKDSR. Positions 373 to 412 are enriched in polar residues; that stretch reads TYTNTTKPKSITRNSQKPNNSQSRTARAHNVSTSNNSSGP.

In terms of assembly, homotrimer.

It is found in the cytoplasm. Its function is as follows. Capsid protein (CA) is the structural component of the virus-like particle (VLP), forming the shell that encapsulates the retrotransposons dimeric RNA genome. The particles are assembled from trimer-clustered units and there are holes in the capsid shells that allow for the diffusion of macromolecules. CA also has nucleocapsid-like chaperone activity, promoting primer tRNA(i)-Met annealing to the multipartite primer-binding site (PBS), dimerization of Ty1 RNA and initiation of reverse transcription. This chain is Transposon Ty1-NL1 Gag polyprotein (TY1A-NL1), found in Saccharomyces cerevisiae (strain ATCC 204508 / S288c) (Baker's yeast).